A 255-amino-acid chain; its full sequence is 5-oxoprolinase subunit A 2 (255 aa).

Belongs to the LamB/PxpA family. In terms of assembly, forms a complex composed of PxpA, PxpB and PxpC.

The catalysed reaction is 5-oxo-L-proline + ATP + 2 H2O = L-glutamate + ADP + phosphate + H(+). Catalyzes the cleavage of 5-oxoproline to form L-glutamate coupled to the hydrolysis of ATP to ADP and inorganic phosphate. In Agrobacterium fabrum (strain C58 / ATCC 33970) (Agrobacterium tumefaciens (strain C58)), this protein is 5-oxoprolinase subunit A 2.